A 635-amino-acid polypeptide reads, in one-letter code: Early transcription factor 70 kDa subunit (635 aa).

The 154-residue stretch at 32–185 folds into the Helicase ATP-binding domain; that stretch reads RSIIDENKSV…SNIISLMSDE (154 aa). 45-52 provides a ligand contact to ATP; it reads HIMGSGKT. The DEXH box signature appears at 135-138; sequence DEAH. The region spanning 326–505 is the Helicase C-terminal domain; that stretch reads KFKYFIGKIT…TLPFDIKKLL (180 aa).

This sequence belongs to the helicase family. VETF subfamily. Heterodimer of a 70 kDa and a 82 kDa subunit.

The protein resides in the virion. Its function is as follows. Acts with RNA polymerase to initiate transcription from early gene promoters. A DNA-dependent ATPase activity is associated with VETF. The polypeptide is Early transcription factor 70 kDa subunit (VETFS) (Erythrocebus patas (Red guenon)).